The following is a 334-amino-acid chain: Transcription initiation factor IIB (334 aa).

Residues 34-65 (TETVCPECGGRQLVHDYERAELVCQSCGLVID) form a TFIIB-type zinc finger. The Zn(2+) site is built by Cys38, Cys41, Cys57, and Cys60. Tandem repeats lie at residues 151–234 (SELD…SREL) and 245–326 (DYVP…ELAE).

The protein belongs to the TFIIB family.

Stabilizes TBP binding to an archaeal box-A promoter. Also responsible for recruiting RNA polymerase II to the pre-initiation complex (DNA-TBP-TFIIB). The protein is Transcription initiation factor IIB of Methanoregula boonei (strain DSM 21154 / JCM 14090 / 6A8).